The primary structure comprises 173 residues: Lens fiber membrane intrinsic protein (173 aa).

The Cytoplasmic segment spans residues 1-3 (MYS). Residues 4–24 (FMGGGLFCAWVGTILLVVAMA) form a helical membrane-spanning segment. Topologically, residues 25–66 (TDHWMQYRLSGSFAHQGLWRYCLGNKCYLQTDSIAYWNATRA) are extracellular. Tryptophan 43 and tryptophan 61 each carry a C-linked (Man) tryptophan glycan. An N-linked (GlcNAc...) asparagine glycan is attached at asparagine 62. The chain crosses the membrane as a helical span at residues 67-87 (FMILSALCAISGIIMGIMAFA). The Cytoplasmic portion of the chain corresponds to 88-98 (HQPTFSRISRP). Residues 99–119 (FSAGIMFFSSTLFVVLALAIY) form a helical membrane-spanning segment. Residues 120–140 (TGVTVSFLGRRFGDWRFSWSY) lie on the Extracellular side of the membrane. The chain crosses the membrane as a helical span at residues 141 to 161 (ILGWVAVLMTFFAGIFYMCAY). At 162–173 (RVHECRRLSTPR) the chain is on the cytoplasmic side. Serine 170 is modified (phosphoserine). Threonine 171 carries the phosphothreonine modification.

Belongs to the PMP-22/EMP/MP20 family. In terms of assembly, seems to be associated with itself or another lens membrane component via disulfide bonds. Eye lens specific.

The protein localises to the membrane. In terms of biological role, present in the thicker 16-17 nm junctions of mammalian lens fiber cells, where it may contribute to cell junctional organization. Acts as a receptor for calmodulin. May play an important role in both lens development and cataractogenesis. The sequence is that of Lens fiber membrane intrinsic protein (LIM2) from Homo sapiens (Human).